The primary structure comprises 229 residues: Ribonuclease 3 (229 aa).

The RNase III domain occupies 8–130 (LTELEKIVGY…IIGAIYLDSD (123 aa)). Glu43 is a Mg(2+) binding site. The active site involves Asp47. The Mg(2+) site is built by Asp116 and Glu119. The active site involves Glu119. The 71-residue stretch at 157–227 (DPKTRLQELL…ATAALEHLQE (71 aa)) folds into the DRBM domain. Residues 201–229 (SPFKGTGTSRRKAEQAAATAALEHLQESA) form a disordered region.

The protein belongs to the ribonuclease III family. Homodimer. The cofactor is Mg(2+).

It localises to the cytoplasm. The catalysed reaction is Endonucleolytic cleavage to 5'-phosphomonoester.. In terms of biological role, digests double-stranded RNA. Involved in the processing of primary rRNA transcript to yield the immediate precursors to the large and small rRNAs (23S and 16S). Processes some mRNAs, and tRNAs when they are encoded in the rRNA operon. Processes pre-crRNA and tracrRNA of type II CRISPR loci if present in the organism. This Idiomarina loihiensis (strain ATCC BAA-735 / DSM 15497 / L2-TR) protein is Ribonuclease 3.